Consider the following 372-residue polypeptide: Glutamate 5-kinase (372 aa).

K6 contacts ATP. The substrate site is built by S46, D133, and N145. ATP contacts are provided by residues 165–166 (TD) and 207–213 (TGGMYTK). Residues 272–350 (SGRLFIDEGA…HEIEKILGYK (79 aa)) enclose the PUA domain.

It belongs to the glutamate 5-kinase family.

Its subcellular location is the cytoplasm. The catalysed reaction is L-glutamate + ATP = L-glutamyl 5-phosphate + ADP. It functions in the pathway amino-acid biosynthesis; L-proline biosynthesis; L-glutamate 5-semialdehyde from L-glutamate: step 1/2. Functionally, catalyzes the transfer of a phosphate group to glutamate to form L-glutamate 5-phosphate. The chain is Glutamate 5-kinase from Thermoanaerobacter pseudethanolicus (strain ATCC 33223 / 39E) (Clostridium thermohydrosulfuricum).